Consider the following 843-residue polypeptide: Pullulanase (843 aa).

A signal peptide spans Met1–Ser19. Asp535 serves as the catalytic Nucleophile. Glu564 functions as the Proton donor in the catalytic mechanism.

It belongs to the glycosyl hydrolase 13 family.

It carries out the reaction Hydrolysis of (1-&gt;6)-alpha-D-glucosidic linkages in pullulan, amylopectin and glycogen, and in the alpha- and beta-limit dextrins of amylopectin and glycogen.. The polypeptide is Pullulanase (pulA) (Thermotoga maritima (strain ATCC 43589 / DSM 3109 / JCM 10099 / NBRC 100826 / MSB8)).